Here is a 124-residue protein sequence, read N- to C-terminus: Small ribosomal subunit protein uS12 (124 aa).

3-methylthioaspartic acid is present on Asp89.

The protein belongs to the universal ribosomal protein uS12 family. Part of the 30S ribosomal subunit. Contacts proteins S8 and S17. May interact with IF1 in the 30S initiation complex.

In terms of biological role, with S4 and S5 plays an important role in translational accuracy. Its function is as follows. Interacts with and stabilizes bases of the 16S rRNA that are involved in tRNA selection in the A site and with the mRNA backbone. Located at the interface of the 30S and 50S subunits, it traverses the body of the 30S subunit contacting proteins on the other side and probably holding the rRNA structure together. The combined cluster of proteins S8, S12 and S17 appears to hold together the shoulder and platform of the 30S subunit. The protein is Small ribosomal subunit protein uS12 of Shewanella frigidimarina (strain NCIMB 400).